Reading from the N-terminus, the 214-residue chain is Adenylate kinase (214 aa).

G10 to T15 contributes to the ATP binding site. The tract at residues S30 to V59 is NMP. AMP contacts are provided by residues T31, R36, K57–V59, G85–R88, and Q92. Residues G122 to D159 form an LID region. ATP-binding positions include R123 and V132 to Y133. R156 and R167 together coordinate AMP. R200 serves as a coordination point for ATP.

It belongs to the adenylate kinase family. Monomer.

It is found in the cytoplasm. The catalysed reaction is AMP + ATP = 2 ADP. Its pathway is purine metabolism; AMP biosynthesis via salvage pathway; AMP from ADP: step 1/1. Functionally, catalyzes the reversible transfer of the terminal phosphate group between ATP and AMP. Plays an important role in cellular energy homeostasis and in adenine nucleotide metabolism. The chain is Adenylate kinase from Erwinia tasmaniensis (strain DSM 17950 / CFBP 7177 / CIP 109463 / NCPPB 4357 / Et1/99).